We begin with the raw amino-acid sequence, 100 residues long: Integration host factor subunit alpha (100 aa).

It belongs to the bacterial histone-like protein family. In terms of assembly, heterodimer of an alpha and a beta chain.

In terms of biological role, this protein is one of the two subunits of integration host factor, a specific DNA-binding protein that functions in genetic recombination as well as in transcriptional and translational control. This is Integration host factor subunit alpha from Jannaschia sp. (strain CCS1).